A 244-amino-acid polypeptide reads, in one-letter code: Ferredoxin--NADP reductase B (244 aa).

One can recognise an FAD-binding FR-type domain in the interval 4 to 106 (AEPFEARLVA…VGPHGLFTRD (103 aa)). FAD-binding positions include 55–58 (RAYS) and Thr-120.

The protein belongs to the ferredoxin--NADP reductase type 1 family. FAD serves as cofactor.

The catalysed reaction is 2 reduced [4Fe-4S]-[ferredoxin] + NADP(+) + H(+) = 2 oxidized [4Fe-4S]-[ferredoxin] + NADPH. In terms of biological role, transports electrons between NADPH and ferredoxin. Can transfer electrons to ferredoxins Fdx2 and Fdx8. Prefers NADPH to NADH. The sequence is that of Ferredoxin--NADP reductase B from Sorangium cellulosum (strain So ce56) (Polyangium cellulosum (strain So ce56)).